The following is a 256-amino-acid chain: Undecaprenyl-diphosphatase (256 aa).

8 helical membrane passes run 5–25, 41–61, 74–94, 100–120, 135–155, 180–200, 208–228, and 234–254; these read IIEIIILSIVQGISEFLPISS, NSLMIDVSLHLGSLLAIVFYF, LLSLLIIGSIPIVIAGYVISS, LLENNLKIIAWTTLIFGIILY, LNFKTILYIGLFQILALIPGV, FLLAIPAIAGASVLQLKNAIG, LVLISITLSFLFSYFTVKFFL, and FSLNVFVIYRIIISIILFIII.

The protein belongs to the UppP family.

The protein localises to the cell inner membrane. It carries out the reaction di-trans,octa-cis-undecaprenyl diphosphate + H2O = di-trans,octa-cis-undecaprenyl phosphate + phosphate + H(+). In terms of biological role, catalyzes the dephosphorylation of undecaprenyl diphosphate (UPP). Confers resistance to bacitracin. The polypeptide is Undecaprenyl-diphosphatase (Pelagibacter ubique (strain HTCC1062)).